The chain runs to 275 residues: NH(3)-dependent NAD(+) synthetase (275 aa).

47 to 54 serves as a coordination point for ATP; that stretch reads GISGGQDS. Position 53 (aspartate 53) interacts with Mg(2+). Arginine 141 is a binding site for deamido-NAD(+). Threonine 161 contacts ATP. Glutamate 166 is a Mg(2+) binding site. Deamido-NAD(+) contacts are provided by lysine 174 and aspartate 181. ATP contacts are provided by lysine 190 and threonine 212. Deamido-NAD(+) is bound at residue 261–262; that stretch reads HK.

It belongs to the NAD synthetase family. As to quaternary structure, homodimer.

The catalysed reaction is deamido-NAD(+) + NH4(+) + ATP = AMP + diphosphate + NAD(+) + H(+). The protein operates within cofactor biosynthesis; NAD(+) biosynthesis; NAD(+) from deamido-NAD(+) (ammonia route): step 1/1. Catalyzes the ATP-dependent amidation of deamido-NAD to form NAD. Uses ammonia as a nitrogen source. In Lactiplantibacillus plantarum (strain ATCC BAA-793 / NCIMB 8826 / WCFS1) (Lactobacillus plantarum), this protein is NH(3)-dependent NAD(+) synthetase.